Consider the following 551-residue polypeptide: Eukaryotic translation initiation factor 3 subunit D-2 (551 aa).

The segment at 105–152 is disordered; that stretch reads NNVRARGRTGRGSQAVGGPGGPAAGGSTANSTKYGKGRNTRNTQNVGR. Residues 119 to 128 show a composition bias toward gly residues; that stretch reads AVGGPGGPAA. Positions 290 to 304 are RNA gate; it reads QFDLLTVNETSLEPP.

Belongs to the eIF-3 subunit D family. As to quaternary structure, component of the eukaryotic translation initiation factor 3 (eIF-3) complex. The eIF-3 complex interacts with pix.

It is found in the cytoplasm. In terms of biological role, mRNA cap-binding component of the eukaryotic translation initiation factor 3 (eIF-3) complex, which is involved in protein synthesis of a specialized repertoire of mRNAs and, together with other initiation factors, stimulates binding of mRNA and methionyl-tRNAi to the 40S ribosome. The eIF-3 complex specifically targets and initiates translation of a subset of mRNAs involved in cell proliferation. In the eIF-3 complex, eif3d specifically recognizes and binds the 7-methylguanosine cap of a subset of mRNAs. The sequence is that of Eukaryotic translation initiation factor 3 subunit D-2 from Drosophila erecta (Fruit fly).